A 238-amino-acid polypeptide reads, in one-letter code: Ribonuclease Rh (238 aa).

The first 16 residues, 1–16, serve as a signal peptide directing secretion; sequence MKAVLALATLIGSTLA. 5 disulfide bridges follow: Cys19–Cys36, Cys26–Cys69, Cys35–Cys136, Cys79–Cys128, and Cys198–Cys229. Active-site residues include His62, Glu121, and His125.

This sequence belongs to the RNase T2 family.

The catalysed reaction is a ribonucleotidyl-ribonucleotide-RNA + H2O = a 3'-end 3'-phospho-ribonucleotide-RNA + a 5'-end dephospho-ribonucleoside-RNA + H(+). This is a base non-specific ribonuclease. The polypeptide is Ribonuclease Rh (Rhizopus niveus).